The primary structure comprises 487 residues: FAD-dependent oxidoreductase domain-containing protein 1 (487 aa).

The helical transmembrane segment at 62 to 82 (EQADVVIIGGGILGLSVAFWL) threads the bilayer.

Associates with components of the mitochondrial respiratory chain complex I. It depends on FAD as a cofactor.

It is found in the mitochondrion inner membrane. Its function is as follows. Required for the assembly of the mitochondrial membrane respiratory chain NADH dehydrogenase (Complex I). Involved in mid-late stages of complex I assembly. This Mus musculus (Mouse) protein is FAD-dependent oxidoreductase domain-containing protein 1 (Foxred1).